We begin with the raw amino-acid sequence, 414 residues long: Tyrosine--tRNA ligase (414 aa).

Tyr-38 serves as a coordination point for L-tyrosine. The 'HIGH' region signature appears at 43-52 (PTAISLHLGN). The L-tyrosine site is built by Tyr-165 and Gln-169. The 'KMSKS' region signature appears at 227 to 231 (KIGKS). Position 230 (Lys-230) interacts with ATP. An S4 RNA-binding domain is found at 349–413 (DDLFLTLVDS…KGKKQYWVIY (65 aa)).

It belongs to the class-I aminoacyl-tRNA synthetase family. TyrS type 1 subfamily. Homodimer.

It localises to the cytoplasm. It catalyses the reaction tRNA(Tyr) + L-tyrosine + ATP = L-tyrosyl-tRNA(Tyr) + AMP + diphosphate + H(+). In terms of biological role, catalyzes the attachment of tyrosine to tRNA(Tyr) in a two-step reaction: tyrosine is first activated by ATP to form Tyr-AMP and then transferred to the acceptor end of tRNA(Tyr). This chain is Tyrosine--tRNA ligase, found in Mycoplasmopsis pulmonis (strain UAB CTIP) (Mycoplasma pulmonis).